The following is a 457-amino-acid chain: Tubulin beta chain (457 aa).

The GTP site is built by glutamine 11, glutamate 69, serine 138, glycine 142, threonine 143, glycine 144, asparagine 204, and asparagine 226. Glutamate 69 is a Mg(2+) binding site. Residues serine 278 and serine 280 each carry the phosphoserine modification. The tract at residues 423–457 (QQYQEATVEDDEEVDENGDFGAPQNQDEPITENFE) is disordered. Residues 429–440 (TVEDDEEVDENG) are compositionally biased toward acidic residues.

This sequence belongs to the tubulin family. As to quaternary structure, dimer of alpha and beta chains. A typical microtubule is a hollow water-filled tube with an outer diameter of 25 nm and an inner diameter of 15 nM. Alpha-beta heterodimers associate head-to-tail to form protofilaments running lengthwise along the microtubule wall with the beta-tubulin subunit facing the microtubule plus end conferring a structural polarity. Microtubules usually have 13 protofilaments but different protofilament numbers can be found in some organisms and specialized cells. Requires Mg(2+) as cofactor.

It is found in the cytoplasm. Its subcellular location is the cytoskeleton. In terms of biological role, tubulin is the major constituent of microtubules, a cylinder consisting of laterally associated linear protofilaments composed of alpha- and beta-tubulin heterodimers. Microtubules grow by the addition of GTP-tubulin dimers to the microtubule end, where a stabilizing cap forms. Below the cap, tubulin dimers are in GDP-bound state, owing to GTPase activity of alpha-tubulin. The protein is Tubulin beta chain (TUB2) of Saccharomyces cerevisiae (strain ATCC 204508 / S288c) (Baker's yeast).